Consider the following 364-residue polypeptide: C2 calcium-dependent domain-containing protein 4A (364 aa).

Disordered stretches follow at residues 118-175 (GSPS…PPRC) and 192-242 (AGRS…RPER). Positions 220 to 233 (SPGSPTQAPVTSLS) are enriched in polar residues. Residues 254 to 364 (AGGALRLAAE…ELLLGPLLLL (111 aa)) form the C2 domain.

The protein belongs to the C2CD4 family.

It is found in the nucleus. Its function is as follows. May be involved in inflammatory process. May regulate cell architecture and adhesion. This is C2 calcium-dependent domain-containing protein 4A (C2CD4A) from Bos taurus (Bovine).